The primary structure comprises 140 residues: Large ribosomal subunit protein uL16 (140 aa).

This sequence belongs to the universal ribosomal protein uL16 family. As to quaternary structure, part of the 50S ribosomal subunit.

In terms of biological role, binds 23S rRNA and is also seen to make contacts with the A and possibly P site tRNAs. The chain is Large ribosomal subunit protein uL16 from Syntrophus aciditrophicus (strain SB).